The primary structure comprises 107 residues: Integration host factor subunit beta (107 aa).

Residues 56–107 (RPSRVGRNPKSGEKVLVPEKHVPHFKPGKELRERVDRNAGEPLKADAADDDL) are disordered. The span at 65–107 (KSGEKVLVPEKHVPHFKPGKELRERVDRNAGEPLKADAADDDL) shows a compositional bias: basic and acidic residues.

Belongs to the bacterial histone-like protein family. In terms of assembly, heterodimer of an alpha and a beta chain.

Functionally, this protein is one of the two subunits of integration host factor, a specific DNA-binding protein that functions in genetic recombination as well as in transcriptional and translational control. This chain is Integration host factor subunit beta, found in Paraburkholderia phymatum (strain DSM 17167 / CIP 108236 / LMG 21445 / STM815) (Burkholderia phymatum).